The primary structure comprises 466 residues: Tryptophan synthase beta chain 2, chloroplastic (466 aa).

The residue at position 161 (lysine 161) is an N6-(pyridoxal phosphate)lysine.

This sequence belongs to the TrpB family. In terms of assembly, tetramer of two alpha and two beta chains. It depends on pyridoxal 5'-phosphate as a cofactor.

The protein resides in the plastid. Its subcellular location is the chloroplast. The catalysed reaction is (1S,2R)-1-C-(indol-3-yl)glycerol 3-phosphate + L-serine = D-glyceraldehyde 3-phosphate + L-tryptophan + H2O. The protein operates within amino-acid biosynthesis; L-tryptophan biosynthesis; L-tryptophan from chorismate: step 5/5. The beta subunit is responsible for the synthesis of L-tryptophan from indole and L-serine. The chain is Tryptophan synthase beta chain 2, chloroplastic (TSB) from Camptotheca acuminata (Happy tree).